Here is a 153-residue protein sequence, read N- to C-terminus: Ribonuclease H (153 aa).

In terms of domain architecture, RNase H type-1 spans 1–141; it reads MKHVHIFTDG…ADELARKGME (141 aa). Positions 9, 47, 69, and 133 each coordinate Mg(2+). The interval 123 to 153 is disordered; sequence HAGHPENERADELARKGMEPFKKARRADAVK. The span at 125 to 153 shows a compositional bias: basic and acidic residues; sequence GHPENERADELARKGMEPFKKARRADAVK.

Belongs to the RNase H family. Monomer. The cofactor is Mg(2+).

It localises to the cytoplasm. It carries out the reaction Endonucleolytic cleavage to 5'-phosphomonoester.. Endonuclease that specifically degrades the RNA of RNA-DNA hybrids. The sequence is that of Ribonuclease H from Rhizobium meliloti (strain 1021) (Ensifer meliloti).